We begin with the raw amino-acid sequence, 99 residues long: Small ribosomal subunit protein uS19 (99 aa).

The segment at 77–99 (TRTFHGHSGDKKAKVAKGGPGGR) is disordered.

This sequence belongs to the universal ribosomal protein uS19 family.

Functionally, protein S19 forms a complex with S13 that binds strongly to the 16S ribosomal RNA. The chain is Small ribosomal subunit protein uS19 from Sorangium cellulosum (strain So ce56) (Polyangium cellulosum (strain So ce56)).